The following is a 464-amino-acid chain: UDP-N-acetylmuramate--L-alanine ligase (464 aa).

Residue 123–129 (GTHGKTT) coordinates ATP.

The protein belongs to the MurCDEF family.

It is found in the cytoplasm. The catalysed reaction is UDP-N-acetyl-alpha-D-muramate + L-alanine + ATP = UDP-N-acetyl-alpha-D-muramoyl-L-alanine + ADP + phosphate + H(+). Its pathway is cell wall biogenesis; peptidoglycan biosynthesis. In terms of biological role, cell wall formation. The polypeptide is UDP-N-acetylmuramate--L-alanine ligase (Carboxydothermus hydrogenoformans (strain ATCC BAA-161 / DSM 6008 / Z-2901)).